Consider the following 454-residue polypeptide: Bifunctional protein GlmU (454 aa).

The interval 1-228 (MTLPLHVVIL…PQHVEGANDP (228 aa)) is pyrophosphorylase. UDP-N-acetyl-alpha-D-glucosamine-binding positions include 10 to 13 (LAAG), Lys-24, Gln-76, 81 to 82 (GT), 103 to 105 (YGD), Gly-138, Glu-153, Asn-168, and Asn-226. Asp-105 is a binding site for Mg(2+). Position 226 (Asn-226) interacts with Mg(2+). Positions 229 to 249 (WQLAQLERAWQLRAARTLCLQ) are linker. Positions 250–454 (GVRMADPARV…IEGWKRPTKK (205 aa)) are N-acetyltransferase. UDP-N-acetyl-alpha-D-glucosamine is bound by residues Arg-332 and Lys-350. The active-site Proton acceptor is His-362. Residues Tyr-365 and Asn-376 each contribute to the UDP-N-acetyl-alpha-D-glucosamine site. Acetyl-CoA is bound by residues Ala-379, 385 to 386 (NY), Ser-404, Ala-422, and Arg-439.

This sequence in the N-terminal section; belongs to the N-acetylglucosamine-1-phosphate uridyltransferase family. In the C-terminal section; belongs to the transferase hexapeptide repeat family. Homotrimer. It depends on Mg(2+) as a cofactor.

It localises to the cytoplasm. The catalysed reaction is alpha-D-glucosamine 1-phosphate + acetyl-CoA = N-acetyl-alpha-D-glucosamine 1-phosphate + CoA + H(+). The enzyme catalyses N-acetyl-alpha-D-glucosamine 1-phosphate + UTP + H(+) = UDP-N-acetyl-alpha-D-glucosamine + diphosphate. It participates in nucleotide-sugar biosynthesis; UDP-N-acetyl-alpha-D-glucosamine biosynthesis; N-acetyl-alpha-D-glucosamine 1-phosphate from alpha-D-glucosamine 6-phosphate (route II): step 2/2. It functions in the pathway nucleotide-sugar biosynthesis; UDP-N-acetyl-alpha-D-glucosamine biosynthesis; UDP-N-acetyl-alpha-D-glucosamine from N-acetyl-alpha-D-glucosamine 1-phosphate: step 1/1. Its pathway is bacterial outer membrane biogenesis; LPS lipid A biosynthesis. Functionally, catalyzes the last two sequential reactions in the de novo biosynthetic pathway for UDP-N-acetylglucosamine (UDP-GlcNAc). The C-terminal domain catalyzes the transfer of acetyl group from acetyl coenzyme A to glucosamine-1-phosphate (GlcN-1-P) to produce N-acetylglucosamine-1-phosphate (GlcNAc-1-P), which is converted into UDP-GlcNAc by the transfer of uridine 5-monophosphate (from uridine 5-triphosphate), a reaction catalyzed by the N-terminal domain. The protein is Bifunctional protein GlmU of Xanthomonas euvesicatoria pv. vesicatoria (strain 85-10) (Xanthomonas campestris pv. vesicatoria).